The primary structure comprises 363 residues: Chorismate synthase (363 aa).

Residues 42–61 form a disordered region; the sequence is QRDLDRRKPGTSRHTTQRQE. NADP(+) is bound by residues arginine 48 and arginine 54. FMN contacts are provided by residues 125–127, 237–238, glycine 277, 292–296, and arginine 318; these read RSS, NA, and KPTSS.

This sequence belongs to the chorismate synthase family. Homotetramer. FMNH2 serves as cofactor.

It catalyses the reaction 5-O-(1-carboxyvinyl)-3-phosphoshikimate = chorismate + phosphate. It participates in metabolic intermediate biosynthesis; chorismate biosynthesis; chorismate from D-erythrose 4-phosphate and phosphoenolpyruvate: step 7/7. Its function is as follows. Catalyzes the anti-1,4-elimination of the C-3 phosphate and the C-6 proR hydrogen from 5-enolpyruvylshikimate-3-phosphate (EPSP) to yield chorismate, which is the branch point compound that serves as the starting substrate for the three terminal pathways of aromatic amino acid biosynthesis. This reaction introduces a second double bond into the aromatic ring system. The chain is Chorismate synthase from Pseudomonas aeruginosa (strain LESB58).